We begin with the raw amino-acid sequence, 315 residues long: Methionyl-tRNA formyltransferase (315 aa).

110–113 is a binding site for (6S)-5,6,7,8-tetrahydrofolate; it reads SLLP.

This sequence belongs to the Fmt family.

The enzyme catalyses L-methionyl-tRNA(fMet) + (6R)-10-formyltetrahydrofolate = N-formyl-L-methionyl-tRNA(fMet) + (6S)-5,6,7,8-tetrahydrofolate + H(+). In terms of biological role, attaches a formyl group to the free amino group of methionyl-tRNA(fMet). The formyl group appears to play a dual role in the initiator identity of N-formylmethionyl-tRNA by promoting its recognition by IF2 and preventing the misappropriation of this tRNA by the elongation apparatus. The protein is Methionyl-tRNA formyltransferase of Mycolicibacterium paratuberculosis (strain ATCC BAA-968 / K-10) (Mycobacterium paratuberculosis).